The primary structure comprises 467 residues: tRNA-2-methylthio-N(6)-dimethylallyladenosine synthase (467 aa).

Residues 1–20 are disordered; it reads MSDDTTQIEPAMAQETSPRA. The region spanning 23–143 is the MTTase N-terminal domain; sequence RKVFVKTYGC…LPNALARVRG (121 aa). [4Fe-4S] cluster is bound by residues C32, C68, C106, C184, C188, and C191. The Radical SAM core domain maps to 170 to 402; sequence RKRGVSAFLT…QALLSAQQYA (233 aa). The 63-residue stretch at 405 to 467 folds into the TRAM domain; it reads DSMIGRKMDV…TNSLIAQKLA (63 aa).

It belongs to the methylthiotransferase family. MiaB subfamily. As to quaternary structure, monomer. The cofactor is [4Fe-4S] cluster.

It localises to the cytoplasm. It catalyses the reaction N(6)-dimethylallyladenosine(37) in tRNA + (sulfur carrier)-SH + AH2 + 2 S-adenosyl-L-methionine = 2-methylsulfanyl-N(6)-dimethylallyladenosine(37) in tRNA + (sulfur carrier)-H + 5'-deoxyadenosine + L-methionine + A + S-adenosyl-L-homocysteine + 2 H(+). Catalyzes the methylthiolation of N6-(dimethylallyl)adenosine (i(6)A), leading to the formation of 2-methylthio-N6-(dimethylallyl)adenosine (ms(2)i(6)A) at position 37 in tRNAs that read codons beginning with uridine. In Brucella suis (strain ATCC 23445 / NCTC 10510), this protein is tRNA-2-methylthio-N(6)-dimethylallyladenosine synthase.